Consider the following 288-residue polypeptide: 4-hydroxy-tetrahydrodipicolinate synthase (288 aa).

Position 43 (T43) interacts with pyruvate. Y131 acts as the Proton donor/acceptor in catalysis. K160 serves as the catalytic Schiff-base intermediate with substrate. I200 contacts pyruvate.

It belongs to the DapA family. Homotetramer; dimer of dimers.

The protein localises to the cytoplasm. It catalyses the reaction L-aspartate 4-semialdehyde + pyruvate = (2S,4S)-4-hydroxy-2,3,4,5-tetrahydrodipicolinate + H2O + H(+). It participates in amino-acid biosynthesis; L-lysine biosynthesis via DAP pathway; (S)-tetrahydrodipicolinate from L-aspartate: step 3/4. Catalyzes the condensation of (S)-aspartate-beta-semialdehyde [(S)-ASA] and pyruvate to 4-hydroxy-tetrahydrodipicolinate (HTPA). This chain is 4-hydroxy-tetrahydrodipicolinate synthase, found in Methanococcus aeolicus (strain ATCC BAA-1280 / DSM 17508 / OCM 812 / Nankai-3).